The primary structure comprises 87 residues: Large ribosomal subunit protein bL27 (87 aa).

The segment covering M1 to R11 has biased composition (polar residues). The tract at residues M1–L21 is disordered.

This sequence belongs to the bacterial ribosomal protein bL27 family.

This chain is Large ribosomal subunit protein bL27, found in Hydrogenobaculum sp. (strain Y04AAS1).